A 466-amino-acid polypeptide reads, in one-letter code: Cysteine--tRNA ligase (466 aa).

Cys-28 is a Zn(2+) binding site. A 'HIGH' region motif is present at residues 30-40 (PTVYNYIHIGN). The Zn(2+) site is built by Cys-208, His-233, and Glu-237. The 'KMSKS' region signature appears at 265-269 (KMSKS). Lys-268 contributes to the ATP binding site.

Belongs to the class-I aminoacyl-tRNA synthetase family. As to quaternary structure, monomer. The cofactor is Zn(2+).

It is found in the cytoplasm. The catalysed reaction is tRNA(Cys) + L-cysteine + ATP = L-cysteinyl-tRNA(Cys) + AMP + diphosphate. This Staphylococcus haemolyticus (strain JCSC1435) protein is Cysteine--tRNA ligase.